The primary structure comprises 55 residues: Variant surface glycoprotein ETAT 1.2 (55 aa).

N-linked (GlcNAc...) asparagine glycosylation occurs at Asn-34. Asn-38 carries GPI-anchor amidated asparagine lipidation. Positions 39 to 55 (NSFAIKTSTLLLAVLLF) are cleaved as a propeptide — removed in mature form.

It localises to the cell membrane. Functionally, VSG forms a coat on the surface of the parasite. The trypanosome evades the immune response of the host by expressing a series of antigenically distinct VSGs from an estimated 1000 VSG genes. In Trypanosoma brucei rhodesiense, this protein is Variant surface glycoprotein ETAT 1.2.